The primary structure comprises 442 residues: ATP-dependent RNA helicase SUB2 (442 aa).

The Q motif motif lies at 59–87; sequence TGFRDFLLKPELLRAISDLGFEHPSEVQQ. Residues 90–265 form the Helicase ATP-binding domain; sequence IPQAILGTDV…KKFMQSPLEI (176 aa). Position 103 to 110 (103 to 110) interacts with ATP; that stretch reads AKSGMGKT. A DECD box motif is present at residues 212-215; it reads DECD. The Helicase C-terminal domain occupies 277-438; sequence GLQQFYLKLE…TLPETVDPAT (162 aa).

The protein belongs to the DEAD box helicase family. DECD subfamily.

It localises to the nucleus. It catalyses the reaction ATP + H2O = ADP + phosphate + H(+). ATP-binding RNA helicase involved in transcription elongation and required for the export of mRNA out of the nucleus. SUB2 also plays a role in pre-mRNA splicing and spliceosome assembly. May be involved in rDNA and telomeric silencing, and maintenance of genome integrity. The protein is ATP-dependent RNA helicase SUB2 (SUB2) of Cryptococcus neoformans var. neoformans serotype D (strain JEC21 / ATCC MYA-565) (Filobasidiella neoformans).